The following is a 304-amino-acid chain: Uricase (304 aa).

Ala-2 is subject to N-acetylalanine. 2 positions are modified to N6-acetyllysine; alternate: Lys-10 and Lys-23. Residues Lys-10 and Lys-23 each carry the N6-succinyllysine; alternate modification. Lys-23 functions as the Charge relay system in the catalytic mechanism. Residues Lys-27 and Lys-36 each carry the N6-acetyllysine modification. Phosphoserine is present on residues Ser-39 and Ser-63. The Charge relay system role is filled by Thr-68. Urate is bound by residues Thr-68 and Asp-69. N6-acetyllysine occurs at positions 118, 122, and 164. A urate-binding site is contributed by Phe-170. N6-acetyllysine is present on residues Lys-175 and Lys-185. Arg-187 serves as a coordination point for urate. 2 positions are modified to N6-acetyllysine; alternate: Lys-221 and Lys-228. N6-succinyllysine; alternate occurs at positions 221 and 228. The residue at position 232 (Ser-232) is a Phosphoserine. Positions 235, 236, and 262 each coordinate urate. His-264 serves as the catalytic Charge relay system. Position 278 is an N6-acetyllysine (Lys-278). Tyr-289 is subject to Phosphotyrosine. A Microbody targeting signal motif is present at residues 302–304 (SRL).

Belongs to the uricase family. As to quaternary structure, homotetramer.

It localises to the peroxisome. It catalyses the reaction urate + O2 + H2O = 5-hydroxyisourate + H2O2. The protein operates within purine metabolism; urate degradation; (S)-allantoin from urate: step 1/3. Functionally, catalyzes the oxidation of uric acid to 5-hydroxyisourate, which is further processed to form (S)-allantoin. The protein is Uricase (UOX) of Sus scrofa (Pig).